The following is a 163-amino-acid chain: Regulatory protein RecX (163 aa).

The disordered stretch occupies residues 1–21 (MSDAEDIPTGRKRRPREQTPV).

Belongs to the RecX family.

Its subcellular location is the cytoplasm. Modulates RecA activity. The chain is Regulatory protein RecX from Stenotrophomonas maltophilia (strain K279a).